Here is a 502-residue protein sequence, read N- to C-terminus: Protein GIS3 (502 aa).

The protein localises to the cytoplasm. It is found in the nucleus. The protein is Protein GIS3 (GIS3) of Saccharomyces cerevisiae (strain ATCC 204508 / S288c) (Baker's yeast).